Reading from the N-terminus, the 201-residue chain is Retinol-binding protein 4 (201 aa).

The N-terminal stretch at methionine 1–alanine 18 is a signal peptide. 3 cysteine pairs are disulfide-bonded: cysteine 22-cysteine 178, cysteine 88-cysteine 192, and cysteine 138-cysteine 147. A substrate-binding site is contributed by glutamine 116. Arginine 139 bears the Omega-N-methylarginine mark.

Belongs to the calycin superfamily. Lipocalin family. In terms of assembly, interacts with TTR. Interaction with TTR prevents its loss by filtration through the kidney glomeruli. Interacts with STRA6.

The protein resides in the secreted. In terms of biological role, retinol-binding protein that mediates retinol transport in blood plasma. Delivers retinol from the liver stores to the peripheral tissues. Transfers the bound all-trans retinol to STRA6, that then facilitates retinol transport across the cell membrane. The protein is Retinol-binding protein 4 (RBP4) of Equus caballus (Horse).